A 272-amino-acid chain; its full sequence is tRNA pseudouridine synthase A (272 aa).

The active-site Nucleophile is Asp52. Residue Tyr110 coordinates substrate.

It belongs to the tRNA pseudouridine synthase TruA family. Homodimer.

It carries out the reaction uridine(38/39/40) in tRNA = pseudouridine(38/39/40) in tRNA. In terms of biological role, formation of pseudouridine at positions 38, 39 and 40 in the anticodon stem and loop of transfer RNAs. The protein is tRNA pseudouridine synthase A of Cupriavidus necator (strain ATCC 17699 / DSM 428 / KCTC 22496 / NCIMB 10442 / H16 / Stanier 337) (Ralstonia eutropha).